Here is a 97-residue protein sequence, read N- to C-terminus: Co-chaperonin GroES (97 aa).

The protein belongs to the GroES chaperonin family. As to quaternary structure, heptamer of 7 subunits arranged in a ring. Interacts with the chaperonin GroEL.

It is found in the cytoplasm. Functionally, together with the chaperonin GroEL, plays an essential role in assisting protein folding. The GroEL-GroES system forms a nano-cage that allows encapsulation of the non-native substrate proteins and provides a physical environment optimized to promote and accelerate protein folding. GroES binds to the apical surface of the GroEL ring, thereby capping the opening of the GroEL channel. The sequence is that of Co-chaperonin GroES from Burkholderia vietnamiensis.